The sequence spans 122 residues: Small ribosomal subunit protein uS13 (122 aa).

The segment at 93–122 (RRGLPVRGQKTKTNARTRKGPKKTIANKKK) is disordered.

It belongs to the universal ribosomal protein uS13 family. As to quaternary structure, part of the 30S ribosomal subunit. Forms a loose heterodimer with protein S19. Forms two bridges to the 50S subunit in the 70S ribosome.

In terms of biological role, located at the top of the head of the 30S subunit, it contacts several helices of the 16S rRNA. In the 70S ribosome it contacts the 23S rRNA (bridge B1a) and protein L5 of the 50S subunit (bridge B1b), connecting the 2 subunits; these bridges are implicated in subunit movement. Contacts the tRNAs in the A and P-sites. In Clostridium beijerinckii (strain ATCC 51743 / NCIMB 8052) (Clostridium acetobutylicum), this protein is Small ribosomal subunit protein uS13.